Consider the following 418-residue polypeptide: Putative ion-transport protein YfeO (418 aa).

12 consecutive transmembrane segments (helical) span residues 10–30 (LLLS…LIVV), 54–74 (DSPL…GLVI), 99–119 (ALPG…SLGP), 120–140 (EHPI…RLLP), 149–169 (ILAS…AALI), 186–206 (LFAP…FFHP), 223–243 (ILSG…AVWC), 258–278 (VLVL…GGPV), 300–320 (DYFL…ASGF), 322–342 (GGRI…LHEH), 343–363 (VPAV…VLVV), and 371–391 (LFMA…CIVM).

This sequence belongs to the chloride channel (TC 2.A.49) family.

The protein resides in the cell membrane. The chain is Putative ion-transport protein YfeO from Shigella boydii serotype 18 (strain CDC 3083-94 / BS512).